We begin with the raw amino-acid sequence, 664 residues long: Semaphorin-7A (664 aa).

Positions 1–44 are cleaved as a signal peptide; sequence MTPPPPGRAAPSAPRARVLSLPARFGLPLRLRLLLVFWVAAASA. The Sema domain maps to 53 to 488; that stretch reads RISAVWKGQD…SQWEVSQVPL (436 aa). N-linked (GlcNAc...) asparagine glycosylation is present at asparagine 102. A disulfide bridge connects residues cysteine 117 and cysteine 123. Arginine 132 carries the post-translational modification Asymmetric dimethylarginine. A disulfide bond links cysteine 140 and cysteine 149. N-linked (GlcNAc...) asparagine glycans are attached at residues asparagine 154 and asparagine 256. 7 disulfides stabilise this stretch: cysteine 264–cysteine 364, cysteine 289–cysteine 333, cysteine 491–cysteine 509, cysteine 498–cysteine 539, cysteine 501–cysteine 516, cysteine 564–cysteine 611, and cysteine 585–cysteine 594. The interaction with integrins stretch occupies residues 265 to 267; it reads RGD. The Cell attachment site signature appears at 265 to 267; the sequence is RGD. Residue asparagine 328 is glycosylated (N-linked (GlcNAc...) asparagine). The 86-residue stretch at 542-627 folds into the Ig-like C2-type domain; the sequence is PKPDEAPLQK…YLREAQHWEL (86 aa). Residue asparagine 600 is glycosylated (N-linked (GlcNAc...) asparagine). A lipid anchor (GPI-anchor amidated alanine) is attached at alanine 646. A propeptide spans 647–664 (removed in mature form); the sequence is ASFWLGVLPTLILGLLVH.

It belongs to the semaphorin family. Interacts with PLXNC1. Interacts with ITGA1 and ITGB1. As to expression, highly expressed in activated T-cells (at protein level). Highest expression in brain. Lower in heart, thymus, spleen, testis and ovary. The expression increases in late embryonic and postnatal stages. Detected in T-cells.

It is found in the cell membrane. Functionally, plays an important role in integrin-mediated signaling and functions both in regulating cell migration and immune responses. Promotes formation of focal adhesion complexes, activation of the protein kinase PTK2/FAK1 and subsequent phosphorylation of MAPK1 and MAPK3. Promotes production of pro-inflammatory cytokines by monocytes and macrophages. Plays an important role in modulating inflammation and T-cell-mediated immune responses. Promotes axon growth in the embryonic olfactory bulb. Promotes attachment, spreading and dendrite outgrowth in melanocytes. The chain is Semaphorin-7A (Sema7a) from Mus musculus (Mouse).